The following is a 102-amino-acid chain: Putative septation protein SpoVG 2 (102 aa).

It belongs to the SpoVG family.

Functionally, could be involved in septation. The protein is Putative septation protein SpoVG 2 of Listeria innocua serovar 6a (strain ATCC BAA-680 / CLIP 11262).